Reading from the N-terminus, the 194-residue chain is PPE family protein PPE41 (194 aa).

It belongs to the mycobacterial PPE family. As to quaternary structure, forms a heterodimer with PE25. The dimer forms a 1:1:1 heterotrimeric complex with EspG5. PPE41 interacts directly with EspG5.

Its subcellular location is the secreted. It localises to the cell surface. The PE25/PPE41 dimer induces both a strong humoral and cellular immune response. The dimer induces necrosis, but not apoptosis, in mouse macrophage cells. It also induces activation and maturation of mouse dendritic cells and drives Th2-biased immune responses. The protein is PPE family protein PPE41 of Mycobacterium tuberculosis (strain ATCC 25618 / H37Rv).